The primary structure comprises 153 residues: Arginine repressor (153 aa).

Belongs to the ArgR family.

It is found in the cytoplasm. It functions in the pathway amino-acid biosynthesis; L-arginine biosynthesis [regulation]. Regulates arginine biosynthesis genes. The protein is Arginine repressor of Syntrophomonas wolfei subsp. wolfei (strain DSM 2245B / Goettingen).